Consider the following 503-residue polypeptide: Protein O-glucosyltransferase 3 (503 aa).

An N-terminal signal peptide occupies residues 1-19 (MQALPLGLQLALLVAAGAG). One copy of the Filamin repeat lies at 19–129 (GARVSAPRSL…VAHSPYILKG (111 aa)). N-linked (GlcNAc...) asparagine glycosylation is found at Asn56 and Asn302. Residues 500-503 (REEL) carry the Prevents secretion from ER motif.

Belongs to the KDELC family.

The protein resides in the endoplasmic reticulum lumen. The catalysed reaction is L-seryl-[EGF-like domain protein] + UDP-alpha-D-glucose = 3-O-(beta-D-glucosyl)-L-seryl-[EGF-like domain protein] + UDP + H(+). It catalyses the reaction L-seryl-[EGF-like domain protein] + UDP-alpha-D-xylose = 3-O-(beta-D-xylosyl)-L-seryl-[EGF-like domain protein] + UDP + H(+). It functions in the pathway protein modification; protein glycosylation. Its function is as follows. Protein glucosyltransferase that catalyzes the transfer of glucose from UDP-glucose to a serine residue within the consensus sequence peptide C-X-N-T-X-G-S-F-X-C. Can also catalyze the transfer of xylose from UDP-xylose but less efficiently. Specifically targets extracellular EGF repeats of proteins such as NOTCH1, NOTCH3, FBN1, FBN2 and LTBP1. May regulate the transport of NOTCH1 and NOTCH3 to the plasma membrane and thereby the Notch signaling pathway. This chain is Protein O-glucosyltransferase 3 (Poglut3), found in Mus musculus (Mouse).